The chain runs to 248 residues: MSYDRAITVFSPDGHLFQVEYAQEAVKKGSTAVGVRGKDIVVLGVEKKSVAKLQDERTVRKICALDDNVCMAFAGLTADARIVINRARVECQSHRLTVEDPVTVEYITRYIASLKQRYTQSNGRRPFGISALIVGFDFDGTPRLYQTDPSGTYHAWKANAIGRGAKSVREFLEKNYTDEAIETDDLTIKLVIKALLEVVQSGGKNIELAVMRRDQPLKILNPEEIEKYVAEIEKEKEENEKKKQKKAS.

O-linked (GlcNAc) serine glycosylation is present at S130. Residue Y153 is modified to Phosphotyrosine. K227 bears the N6-acetyllysine mark.

Belongs to the peptidase T1A family. The 26S proteasome consists of a 20S proteasome core and two 19S regulatory subunits. The 20S proteasome core is a barrel-shaped complex made of 28 subunits that are arranged in four stacked rings. The two outer rings are each formed by seven alpha subunits, and the two inner rings are formed by seven beta subunits. The proteolytic activity is exerted by three beta-subunits PSMB5, PSMB6 and PSMB7. PSMA7 interacts directly with the PSMG1-PSMG2 heterodimer which promotes 20S proteasome assembly. Interacts with HIF1A. Interacts with RAB7A. Interacts with PRKN. Interacts with ABL1 and ABL2. Interacts with EMAP2. Interacts with MAVS.

It is found in the cytoplasm. The protein localises to the nucleus. Its function is as follows. Component of the 20S core proteasome complex involved in the proteolytic degradation of most intracellular proteins. This complex plays numerous essential roles within the cell by associating with different regulatory particles. Associated with two 19S regulatory particles, forms the 26S proteasome and thus participates in the ATP-dependent degradation of ubiquitinated proteins. The 26S proteasome plays a key role in the maintenance of protein homeostasis by removing misfolded or damaged proteins that could impair cellular functions, and by removing proteins whose functions are no longer required. Associated with the PA200 or PA28, the 20S proteasome mediates ubiquitin-independent protein degradation. This type of proteolysis is required in several pathways including spermatogenesis (20S-PA200 complex) or generation of a subset of MHC class I-presented antigenic peptides (20S-PA28 complex). Inhibits the transactivation function of HIF-1A under both normoxic and hypoxia-mimicking conditions. The interaction with EMAP2 increases the proteasome-mediated HIF-1A degradation under the hypoxic conditions. Plays a role in hepatitis C virus internal ribosome entry site-mediated translation. Mediates nuclear translocation of the androgen receptor (AR) and thereby enhances androgen-mediated transactivation. Promotes MAVS degradation and thereby negatively regulates MAVS-mediated innate immune response. The sequence is that of Proteasome subunit alpha type-7 (PSMA7) from Bos taurus (Bovine).